The following is a 430-amino-acid chain: Adenylosuccinate synthetase (430 aa).

Residues 12-18 (GDEGKGK) and 40-42 (GHT) contribute to the GTP site. Asp13 serves as the catalytic Proton acceptor. The Mg(2+) site is built by Asp13 and Gly40. IMP is bound by residues 13–16 (DEGK), 38–41 (NAGH), Thr130, Arg144, Gln224, Thr239, and Arg303. Catalysis depends on His41, which acts as the Proton donor. 299–305 (VVTGRPR) serves as a coordination point for substrate. Residues Arg305, 331-333 (KLD), and 413-415 (STS) contribute to the GTP site.

The protein belongs to the adenylosuccinate synthetase family. Homodimer. The cofactor is Mg(2+).

Its subcellular location is the cytoplasm. The enzyme catalyses IMP + L-aspartate + GTP = N(6)-(1,2-dicarboxyethyl)-AMP + GDP + phosphate + 2 H(+). It participates in purine metabolism; AMP biosynthesis via de novo pathway; AMP from IMP: step 1/2. In terms of biological role, plays an important role in the de novo pathway of purine nucleotide biosynthesis. Catalyzes the first committed step in the biosynthesis of AMP from IMP. This Azorhizobium caulinodans (strain ATCC 43989 / DSM 5975 / JCM 20966 / LMG 6465 / NBRC 14845 / NCIMB 13405 / ORS 571) protein is Adenylosuccinate synthetase.